A 290-amino-acid polypeptide reads, in one-letter code: Ribosomal RNA small subunit methyltransferase A (290 aa).

N27, L29, G54, E75, D100, and N125 together coordinate S-adenosyl-L-methionine.

It belongs to the class I-like SAM-binding methyltransferase superfamily. rRNA adenine N(6)-methyltransferase family. RsmA subfamily.

It localises to the cytoplasm. It carries out the reaction adenosine(1518)/adenosine(1519) in 16S rRNA + 4 S-adenosyl-L-methionine = N(6)-dimethyladenosine(1518)/N(6)-dimethyladenosine(1519) in 16S rRNA + 4 S-adenosyl-L-homocysteine + 4 H(+). Its function is as follows. Specifically dimethylates two adjacent adenosines (A1518 and A1519) in the loop of a conserved hairpin near the 3'-end of 16S rRNA in the 30S particle. May play a critical role in biogenesis of 30S subunits. This chain is Ribosomal RNA small subunit methyltransferase A, found in Streptococcus pneumoniae (strain 70585).